Consider the following 277-residue polypeptide: Venom serine protease (277 aa).

Positions 1 to 19 are cleaved as a signal peptide; the sequence is MNCGKIILLFITIIGVAKS. The Peptidase S1 domain occupies 34–269; sequence IVNGVETEIN…FMEFIHNATI (236 aa). Cys-60 and Cys-76 are joined by a disulfide. Residue His-75 is the Charge relay system of the active site. N-linked (GlcNAc...) asparagine glycans are attached at residues Asn-84 and Asn-104. Asp-126 serves as the catalytic Charge relay system. N-linked (GlcNAc...) asparagine glycosylation is found at Asn-155 and Asn-158. 2 cysteine pairs are disulfide-bonded: Cys-192/Cys-207 and Cys-216/Cys-246. Residue Asn-218 is glycosylated (N-linked (GlcNAc...) asparagine). The active-site Charge relay system is the Ser-220. N-linked (GlcNAc...) asparagine glycosylation occurs at Asn-266.

The protein belongs to the peptidase S1 family. As to expression, expressed by the venom duct.

It localises to the secreted. This Polistes dominula (European paper wasp) protein is Venom serine protease.